Here is a 247-residue protein sequence, read N- to C-terminus: Coproheme decarboxylase (247 aa).

Residues Arg-129, 143–147 (YPMDK), His-170, Gln-183, and Ser-221 contribute to the Fe-coproporphyrin III site. Residue Tyr-143 is part of the active site.

The protein belongs to the ChdC family. Type 1 subfamily. Fe-coproporphyrin III serves as cofactor.

It catalyses the reaction Fe-coproporphyrin III + 2 H2O2 + 2 H(+) = heme b + 2 CO2 + 4 H2O. The enzyme catalyses Fe-coproporphyrin III + H2O2 + H(+) = harderoheme III + CO2 + 2 H2O. It carries out the reaction harderoheme III + H2O2 + H(+) = heme b + CO2 + 2 H2O. It functions in the pathway porphyrin-containing compound metabolism; protoheme biosynthesis. Involved in coproporphyrin-dependent heme b biosynthesis. Catalyzes the decarboxylation of Fe-coproporphyrin III (coproheme) to heme b (protoheme IX), the last step of the pathway. The reaction occurs in a stepwise manner with a three-propionate intermediate. The polypeptide is Coproheme decarboxylase (Bacillus cereus (strain ATCC 10987 / NRS 248)).